A 457-amino-acid polypeptide reads, in one-letter code: uncharacterized protein (457 aa).

The next 2 membrane-spanning stretches (helical) occupy residues 1-21 and 250-270; these read MVSS…MTLL and ILIV…ATTF.

The protein localises to the membrane. This is an uncharacterized protein from Saccharomyces cerevisiae (strain ATCC 204508 / S288c) (Baker's yeast).